A 103-amino-acid chain; its full sequence is Urease subunit gamma (103 aa).

The protein belongs to the urease gamma subunit family. As to quaternary structure, heterotrimer of UreA (gamma), UreB (beta) and UreC (alpha) subunits. Three heterotrimers associate to form the active enzyme.

The protein resides in the cytoplasm. The enzyme catalyses urea + 2 H2O + H(+) = hydrogencarbonate + 2 NH4(+). It participates in nitrogen metabolism; urea degradation; CO(2) and NH(3) from urea (urease route): step 1/1. The protein is Urease subunit gamma of Paracoccus denitrificans (strain Pd 1222).